The chain runs to 101 residues: Ubiquitin-related modifier 1 homolog (101 aa).

G101 is subject to 1-thioglycine. Residue G101 forms a Glycyl lysine isopeptide (Gly-Lys) (interchain with K-? in acceptor proteins) linkage.

The protein belongs to the URM1 family. Interacts with cer. C-terminal thiocarboxylation occurs in 2 steps, it is first acyl-adenylated (-COAMP) via the hesA/moeB/thiF part of the MOCS3 homolog, then thiocarboxylated (-COSH) via the rhodanese domain of the MOCS3 homolog.

The protein localises to the cytoplasm. It participates in tRNA modification; 5-methoxycarbonylmethyl-2-thiouridine-tRNA biosynthesis. Functionally, acts as a sulfur carrier required for 2-thiolation of mcm(5)S(2)U at tRNA wobble positions of cytosolic tRNA(Lys), tRNA(Glu) and tRNA(Gln). Serves as sulfur donor in tRNA 2-thiolation reaction by being thiocarboxylated (-COSH) at its C-terminus by MOCS3. The sulfur is then transferred to tRNA to form 2-thiolation of mcm(5)S(2)U. Also acts as a ubiquitin-like protein (UBL) that is covalently conjugated via an isopeptide bond to lysine residues of target proteins such as Prx2/Jafrac1, Ciao1, Eip71CD and GILT1. The thiocarboxylated form serves as substrate for conjugation and oxidative stress specifically induces the formation of UBL-protein conjugates. This is Ubiquitin-related modifier 1 homolog from Drosophila ananassae (Fruit fly).